The following is a 417-amino-acid chain: Histidinol-phosphate aminotransferase 1, chloroplastic (417 aa).

The N-terminal 40 residues, 1–40, are a transit peptide targeting the chloroplast; sequence MGVINVQGSPSFSIHSSESNLRKSRALKKPFCSIRNRVYC. Position 41 is an N-acetylalanine (Ala41). Lys277 is subject to N6-(pyridoxal phosphate)lysine.

This sequence belongs to the class-II pyridoxal-phosphate-dependent aminotransferase family. Histidinol-phosphate aminotransferase subfamily. As to quaternary structure, homodimer. The cofactor is pyridoxal 5'-phosphate. As to expression, expressed in both vegetative and reproductive tissues.

It localises to the plastid. Its subcellular location is the chloroplast. The catalysed reaction is L-histidinol phosphate + 2-oxoglutarate = 3-(imidazol-4-yl)-2-oxopropyl phosphate + L-glutamate. The protein operates within amino-acid biosynthesis; L-histidine biosynthesis; L-histidine from 5-phospho-alpha-D-ribose 1-diphosphate: step 7/9. The sequence is that of Histidinol-phosphate aminotransferase 1, chloroplastic (HISN6A) from Arabidopsis thaliana (Mouse-ear cress).